Here is a 523-residue protein sequence, read N- to C-terminus: 2-isopropylmalate synthase (523 aa).

Residues 5-267 (VIIFDTTLRD…HTAINHQEIW (263 aa)) enclose the Pyruvate carboxyltransferase domain. Positions 14, 202, 204, and 238 each coordinate Mn(2+). The segment at 392 to 523 (RLDYFSVQSG…QHNENNKETV (132 aa)) is regulatory domain.

It belongs to the alpha-IPM synthase/homocitrate synthase family. LeuA type 1 subfamily. In terms of assembly, homodimer. The cofactor is Mn(2+).

It is found in the cytoplasm. The enzyme catalyses 3-methyl-2-oxobutanoate + acetyl-CoA + H2O = (2S)-2-isopropylmalate + CoA + H(+). It participates in amino-acid biosynthesis; L-leucine biosynthesis; L-leucine from 3-methyl-2-oxobutanoate: step 1/4. In terms of biological role, catalyzes the condensation of the acetyl group of acetyl-CoA with 3-methyl-2-oxobutanoate (2-ketoisovalerate) to form 3-carboxy-3-hydroxy-4-methylpentanoate (2-isopropylmalate). The chain is 2-isopropylmalate synthase from Escherichia coli O157:H7.